The following is a 377-amino-acid chain: Serine/threonine-protein phosphatase PP2A-2 catalytic subunit (377 aa).

A disordered region spans residues 1–66; it reads MDMEIDDPMH…SGIADHKSSK (66 aa). Over residues 28–40 the composition is skewed to basic and acidic residues; sequence DDGKNNTKARSND. At Ser-38 the chain carries Phosphoserine. Thr-43 carries the phosphothreonine modification. The Mn(2+) site is built by Asp-125, His-127, Asp-153, and Asn-185. His-186 serves as the catalytic Proton donor. Residues His-235 and His-309 each coordinate Mn(2+). At Leu-377 the chain carries Leucine methyl ester.

The protein belongs to the PPP phosphatase family. PP-2A subfamily. Inactivated in a complex with phosphatase methylesterase PPE1 (PP2Ai). Interacts with phosphatase 2A activator RRD2, which can reactivate PP2Ai by dissociating the catalytic subunit from the complex. Interacts with TAP42. The cofactor is Mn(2+). Reversibly methyl esterified on Leu-377 by leucine carboxyl methyltransferase 1 (PPM1) and protein phosphatase methylesterase 1 (PPE1). Carboxyl methylation influences the affinity of the catalytic subunit for the different regulatory subunits, thereby modulating the PP2A holoenzyme's substrate specificity, enzyme activity and cellular localization.

It catalyses the reaction O-phospho-L-seryl-[protein] + H2O = L-seryl-[protein] + phosphate. The catalysed reaction is O-phospho-L-threonyl-[protein] + H2O = L-threonyl-[protein] + phosphate. In terms of biological role, exact function not known, phosphatase 2A performs an essential cellular function. The polypeptide is Serine/threonine-protein phosphatase PP2A-2 catalytic subunit (PPH22) (Saccharomyces cerevisiae (strain ATCC 204508 / S288c) (Baker's yeast)).